Consider the following 364-residue polypeptide: Suberization-associated anionic peroxidase 1 (364 aa).

Residues 1 to 25 form the signal peptide; sequence MGFRLSHLSLALSFVALALAGVAIY. Asn36 is a glycosylation site (N-linked (GlcNAc...) asparagine). Cystine bridges form between Cys81/Cys160 and Cys112/Cys117. The active-site Proton acceptor is His110. 4 residues coordinate Ca(2+): Asp111, Val114, Gly116, and Asp118. Asn127, Asn162, and Asn200 each carry an N-linked (GlcNAc...) asparagine glycan. 2 cysteine pairs are disulfide-bonded: Cys167-Cys353 and Cys246-Cys265. Pro209 lines the substrate pocket. N-linked (GlcNAc...) asparagine glycans are attached at residues Asn214 and Asn226. His239 serves as a coordination point for heme b. Position 240 (Thr240) interacts with Ca(2+). Asn264 is a glycosylation site (N-linked (GlcNAc...) asparagine). Residues Asp278, Thr280, and Asp285 each contribute to the Ca(2+) site.

Belongs to the peroxidase family. Classical plant (class III) peroxidase subfamily. Ca(2+) is required as a cofactor. Requires heme b as cofactor.

The protein resides in the secreted. The catalysed reaction is 2 a phenolic donor + H2O2 = 2 a phenolic radical donor + 2 H2O. Functionally, removal of H(2)O(2), oxidation of toxic reductants, biosynthesis and degradation of lignin, suberization, auxin catabolism, response to environmental stresses such as wounding, pathogen attack and oxidative stress. These functions might be dependent on each isozyme/isoform in each plant tissue. In terms of biological role, suggested to catalyze the deposition of the aromatic residues of suberin on the cell wall and thus play a role in cell-suberization. In Solanum lycopersicum (Tomato), this protein is Suberization-associated anionic peroxidase 1 (TAP1).